Reading from the N-terminus, the 319-residue chain is Thioredoxin reductase (319 aa).

36-43 (TGTNKGGQ) contacts FAD. A disulfide bond links Cys-136 and Cys-139. FAD is bound at residue 288 to 297 (DVIDHVYRQA).

It belongs to the class-II pyridine nucleotide-disulfide oxidoreductase family. As to quaternary structure, homodimer. FAD is required as a cofactor.

The protein resides in the cytoplasm. It catalyses the reaction [thioredoxin]-dithiol + NADP(+) = [thioredoxin]-disulfide + NADPH + H(+). The sequence is that of Thioredoxin reductase (trxB) from Buchnera aphidicola subsp. Acyrthosiphon pisum (strain APS) (Acyrthosiphon pisum symbiotic bacterium).